The sequence spans 429 residues: Probable exoglucanase GH6D (429 aa).

Residues M1–A17 form the signal peptide. Substrate is bound by residues W75 and S77. Residues D115 and D162 each act as proton donor in the active site. Positions 206 and 209 each coordinate substrate. An N-linked (GlcNAc...) asparagine glycan is attached at N237. Substrate-binding residues include N240, W300, K328, and E332. The segment at N240 to E261 is disordered. Positions P362–T390 are disordered. Residues P378–T390 are compositionally biased toward low complexity. A CBM1 domain is found at N394–L429.

Belongs to the glycosyl hydrolase 6 (cellulase B) family.

It localises to the secreted. In terms of biological role, probable exoglucanase that may play an important function in biomass degradation by catalyzing the hydrolysis of cellulose. The polypeptide is Probable exoglucanase GH6D (Podospora anserina (strain S / ATCC MYA-4624 / DSM 980 / FGSC 10383) (Pleurage anserina)).